The primary structure comprises 543 residues: Steroid receptor seven-up, isoforms B/C (543 aa).

Positions 38–191 are disordered; it reads PPHSAWHEPP…HSQSSNSGSQ (154 aa). Residues 56 to 68 show a composition bias toward low complexity; the sequence is AASAGPGTTTGSV. The span at 83–101 shows a compositional bias: polar residues; it reads QQSAVIKQDLSCPSLNQAG. Over residues 122–141 the composition is skewed to gly residues; the sequence is GSAGGHHSGSGSGSGSGVNP. Over residues 158 to 170 the composition is skewed to polar residues; sequence MLTSIKGQPTGCG. The span at 171-191 shows a compositional bias: low complexity; it reads STTPSSQANSSHSQSSNSGSQ. A DNA-binding region (nuclear receptor) is located at residues 197-272; sequence NIECVVCGDK…MGMRREAVQR (76 aa). 2 NR C4-type zinc fingers span residues 200–220 and 236–260; these read CVVC…CEGC and CRGS…LKKC. In terms of domain architecture, NR LBD spans 307-532; it reads YLSSYISLLL…TLIRDMLLSG (226 aa).

The protein belongs to the nuclear hormone receptor family. NR2 subfamily. Expressed in several embryonic tissues; dorsal vessel, oenocyte and fat body. CNS expression is dynamic and confined to temporally restricted subsections of the NB lineage; expressed in many NB and GMCs, but only a small number of neurons.

It localises to the nucleus. Functionally, receptor that is required in photoreceptors R1, R3, R4 and R6 during eye development; generation of the ganglion mother cell-2 (GMC-2) fate in the nb7-3 lineage, coinciding with the transition in the expression of HB to KR in the neuroblasts (NBs). In Drosophila melanogaster (Fruit fly), this protein is Steroid receptor seven-up, isoforms B/C (svp).